The chain runs to 314 residues: Methionyl-tRNA formyltransferase (314 aa).

113-116 (SLLP) contributes to the (6S)-5,6,7,8-tetrahydrofolate binding site.

Belongs to the Fmt family.

The catalysed reaction is L-methionyl-tRNA(fMet) + (6R)-10-formyltetrahydrofolate = N-formyl-L-methionyl-tRNA(fMet) + (6S)-5,6,7,8-tetrahydrofolate + H(+). Its function is as follows. Attaches a formyl group to the free amino group of methionyl-tRNA(fMet). The formyl group appears to play a dual role in the initiator identity of N-formylmethionyl-tRNA by promoting its recognition by IF2 and preventing the misappropriation of this tRNA by the elongation apparatus. The sequence is that of Methionyl-tRNA formyltransferase from Pseudomonas syringae pv. tomato (strain ATCC BAA-871 / DC3000).